A 220-amino-acid chain; its full sequence is N-(5'-phosphoribosyl)anthranilate isomerase (220 aa).

The protein belongs to the TrpF family.

It carries out the reaction N-(5-phospho-beta-D-ribosyl)anthranilate = 1-(2-carboxyphenylamino)-1-deoxy-D-ribulose 5-phosphate. The protein operates within amino-acid biosynthesis; L-tryptophan biosynthesis; L-tryptophan from chorismate: step 3/5. This is N-(5'-phosphoribosyl)anthranilate isomerase from Bordetella petrii (strain ATCC BAA-461 / DSM 12804 / CCUG 43448).